The following is a 289-amino-acid chain: uncharacterized protein (289 aa).

A disordered region spans residues 25–66 (GGSGDSQSAHTPSTSIHTQNNSTPNKNTSTPPVNVSNANNLE). Residues 33–43 (AHTPSTSIHTQ) are compositionally biased toward polar residues. Over residues 44-59 (NNSTPNKNTSTPPVNV) the composition is skewed to low complexity.

This is an uncharacterized protein from Haemophilus influenzae (strain ATCC 51907 / DSM 11121 / KW20 / Rd).